An 86-amino-acid chain; its full sequence is UPF0291 protein LBA1279 (86 aa).

2 stretches are compositionally biased toward basic and acidic residues: residues 1-27 and 65-75; these read MNKD…KENE and NGKEVTSEKAK. Disordered stretches follow at residues 1–36 and 65–86; these read MNKD…EEEE and NGKE…LRKD. Positions 76 to 86 are enriched in basic residues; that stretch reads QAQRKKGLRKD.

It belongs to the UPF0291 family.

The protein localises to the cytoplasm. This is UPF0291 protein LBA1279 from Lactobacillus acidophilus (strain ATCC 700396 / NCK56 / N2 / NCFM).